The following is a 299-amino-acid chain: Acetaldehyde dehydrogenase (299 aa).

11-14 (SGNI) contacts NAD(+). The active-site Acyl-thioester intermediate is Cys-126. Residues 157–165 (SAGPGTRAN) and Asn-267 each bind NAD(+).

This sequence belongs to the acetaldehyde dehydrogenase family.

The catalysed reaction is acetaldehyde + NAD(+) + CoA = acetyl-CoA + NADH + H(+). The sequence is that of Acetaldehyde dehydrogenase from Bacillus thuringiensis (strain Al Hakam).